The chain runs to 441 residues: Synaptotagmin-1 (441 aa).

At 1–69 (MVKLDFSSQD…DVVKEKVMQQ (69 aa)) the chain is on the vesicular side. Residues 70 to 96 (TGMPEWAFVFLGFVFILLVLACAFCLI) traverse the membrane as a helical segment. At 97–441 (RKLFGKKRHG…EEGDKKDDKK (345 aa)) the chain is on the cytoplasmic side. 2 consecutive C2 domains span residues 159–278 (KLGR…EEWK) and 292–425 (SLGD…AQWH). Residues aspartate 190, aspartate 196, aspartate 248, phenylalanine 249, aspartate 250, serine 253, lysine 254, aspartate 256, aspartate 323, aspartate 329, aspartate 383, aspartate 385, and aspartate 391 each contribute to the Ca(2+) site.

It belongs to the synaptotagmin family. Ca(2+) serves as cofactor. Localized to regions known to be rich in synapses and appears to be associated with synaptic vesicles. Also found in some non-neuronal secretory structures.

The protein resides in the cytoplasmic vesicle. The protein localises to the secretory vesicle. It is found in the synaptic vesicle membrane. Its subcellular location is the synapse. May have a regulatory role in the membrane interactions during trafficking of synaptic vesicles at the active zone of the synapse. It binds acidic phospholipids with a specificity that requires the presence of both an acidic head group and a diacyl backbone. Involved in necrotic cell death. The sequence is that of Synaptotagmin-1 (snt-1) from Caenorhabditis elegans.